Reading from the N-terminus, the 254-residue chain is tRNA (guanine-N(1)-)-methyltransferase (254 aa).

Residues glycine 117 and 136–141 (LGDFVL) each bind S-adenosyl-L-methionine.

Belongs to the RNA methyltransferase TrmD family. Homodimer.

The protein resides in the cytoplasm. It catalyses the reaction guanosine(37) in tRNA + S-adenosyl-L-methionine = N(1)-methylguanosine(37) in tRNA + S-adenosyl-L-homocysteine + H(+). Functionally, specifically methylates guanosine-37 in various tRNAs. The polypeptide is tRNA (guanine-N(1)-)-methyltransferase (Levilactobacillus brevis (strain ATCC 367 / BCRC 12310 / CIP 105137 / JCM 1170 / LMG 11437 / NCIMB 947 / NCTC 947) (Lactobacillus brevis)).